A 53-amino-acid polypeptide reads, in one-letter code: Large ribosomal subunit protein eL40 (53 aa).

The protein belongs to the eukaryotic ribosomal protein eL40 family.

This Pyrobaculum neutrophilum (strain DSM 2338 / JCM 9278 / NBRC 100436 / V24Sta) (Thermoproteus neutrophilus) protein is Large ribosomal subunit protein eL40.